Here is an 80-residue protein sequence, read N- to C-terminus: Centromere protein X (80 aa).

It belongs to the CENP-X/MHF2 family. Heterodimer with CENPX, sometimes called MHF; this interaction stabilizes both partners. MHF heterodimers can assemble to form tetrameric structures. MHF also coassemble with CENPT-CENPW heterodimers at centromeres to form the tetrameric CENP-T-W-S-X complex. Forms a discrete complex with FANCM and CENPX, called FANCM-MHF; this interaction, probably mediated by direct binding between CENPS and FANCM, leads to synergistic activation of double-stranded DNA binding and strongly stimulates FANCM-mediated DNA remodeling. Recruited by FANCM to the Fanconi anemia (FA) core complex, which consists of CENPS, CENPX, FANCA, FANCB, FANCC, FANCE, FANCF, FANCG, FANCL, FANCM, FAAP24 and FAAP100. The FA core complex associates with Bloom syndrome (BLM) complex, which consists of at least BLM, DNA topoisomerase 3-alpha (TOP3A), RMI1/BLAP75, RPA1/RPA70 and RPA2/RPA32. The super complex between FA and BLM is called BRAFT.

The protein localises to the nucleus. It is found in the chromosome. Its subcellular location is the centromere. It localises to the kinetochore. Functionally, DNA-binding component of the Fanconi anemia (FA) core complex. Required for the normal activation of the FA pathway, leading to monoubiquitination of the FANCI-FANCD2 complex in response to DNA damage, cellular resistance to DNA cross-linking drugs, and prevention of chromosomal breakage. In complex with CENPS (MHF heterodimer), crucial cofactor for FANCM in both binding and ATP-dependent remodeling of DNA. Stabilizes FANCM. In complex with CENPS and FANCM (but not other FANC proteins), rapidly recruited to blocked forks and promotes gene conversion at blocked replication forks. In complex with CENPS, CENPT and CENPW (CENP-T-W-S-X heterotetramer), involved in the formation of a functional kinetochore outer plate, which is essential for kinetochore-microtubule attachment and faithful mitotic progression. As a component of MHF and CENP-T-W-S-X complexes, binds DNA and bends it to form a nucleosome-like structure. DNA-binding function is fulfilled in the presence of CENPS, with the following preference for DNA substates: Holliday junction &gt; double-stranded &gt; splay arm &gt; single-stranded. Does not bind DNA on its own. This chain is Centromere protein X (CENPX), found in Gallus gallus (Chicken).